Reading from the N-terminus, the 699-residue chain is tRNA 5-methylaminomethyl-2-thiouridine biosynthesis bifunctional protein MnmC (699 aa).

Positions 1–247 (MPAVSRPLPP…KREMLCGEIA (247 aa)) are tRNA (mnm(5)s(2)U34)-methyltransferase. An FAD-dependent cmnm(5)s(2)U34 oxidoreductase region spans residues 275–699 (IGAGLAGTSV…QPSPTTTETP (425 aa)). The interval 675–699 (RGNATLSTSSPNDDAQPSPTTTETP) is disordered.

It in the N-terminal section; belongs to the methyltransferase superfamily. tRNA (mnm(5)s(2)U34)-methyltransferase family. The protein in the C-terminal section; belongs to the DAO family. FAD is required as a cofactor.

The protein resides in the cytoplasm. It catalyses the reaction 5-aminomethyl-2-thiouridine(34) in tRNA + S-adenosyl-L-methionine = 5-methylaminomethyl-2-thiouridine(34) in tRNA + S-adenosyl-L-homocysteine + H(+). Its function is as follows. Catalyzes the last two steps in the biosynthesis of 5-methylaminomethyl-2-thiouridine (mnm(5)s(2)U) at the wobble position (U34) in tRNA. Catalyzes the FAD-dependent demodification of cmnm(5)s(2)U34 to nm(5)s(2)U34, followed by the transfer of a methyl group from S-adenosyl-L-methionine to nm(5)s(2)U34, to form mnm(5)s(2)U34. The protein is tRNA 5-methylaminomethyl-2-thiouridine biosynthesis bifunctional protein MnmC of Chromohalobacter salexigens (strain ATCC BAA-138 / DSM 3043 / CIP 106854 / NCIMB 13768 / 1H11).